We begin with the raw amino-acid sequence, 333 residues long: Large ribosomal subunit protein mL39 (333 aa).

The 67-residue stretch at 56–122 folds into the TGS domain; that stretch reads DKIEVRYLGL…QESCTLQLLN (67 aa). Positions 311–333 are disordered; it reads SKKPSPARLPNEPFEEQQQLQLS.

It belongs to the mitochondrion-specific ribosomal protein mL39 family. In terms of assembly, component of the mitochondrial ribosome large subunit (39S) which comprises a 16S rRNA and about 50 distinct proteins.

Its subcellular location is the mitochondrion. The chain is Large ribosomal subunit protein mL39 (mRpL39) from Drosophila melanogaster (Fruit fly).